The following is a 232-amino-acid chain: MLTFLAIIVVAYLIGSIPTSIIAGKLLKGIDIREFGSGNAGGTNAFRVLGWKAGLVVTLIDIAKGTIAAVPVVGFFKAHPLGAFPDMNEIALSLIAGMAAVIGHVFTVFAGFKGGKGVSTAAGMLIGIAPVSMLMVIGIFLLAVTISRYVSVGSILAAIAFPLIIAIRKYVFDLGSGLDYRFFDHWFVHDSLDYHLLIFGGIVAVAIIYTHRANIKRLFSGTENRLSFGRKN.

Helical transmembrane passes span 4–24 (FLAI…IIAG), 56–76 (VVTL…VGFF), 90–110 (IALS…TVFA), 124–144 (MLIG…LLAV), 152–172 (VGSI…KYVF), and 191–211 (SLDY…IYTH).

Belongs to the PlsY family. Probably interacts with PlsX.

The protein localises to the cell inner membrane. It catalyses the reaction an acyl phosphate + sn-glycerol 3-phosphate = a 1-acyl-sn-glycero-3-phosphate + phosphate. The protein operates within lipid metabolism; phospholipid metabolism. Functionally, catalyzes the transfer of an acyl group from acyl-phosphate (acyl-PO(4)) to glycerol-3-phosphate (G3P) to form lysophosphatidic acid (LPA). This enzyme utilizes acyl-phosphate as fatty acyl donor, but not acyl-CoA or acyl-ACP. The sequence is that of Glycerol-3-phosphate acyltransferase from Chlorobaculum tepidum (strain ATCC 49652 / DSM 12025 / NBRC 103806 / TLS) (Chlorobium tepidum).